We begin with the raw amino-acid sequence, 544 residues long: MLNMQGAEERDIRRETCPGWVNKNKPALEQDVCKIDSSGIVVKRFQEDEYQDSTFEEKYACEGMKENSPREIAESCLFQEGGFGRITFIHKEAPPEIISQGYNFEKSLLLTSSLVTRLRVSTEESLHQWETSNIQTNDISDQSKCPTLCTQKKSWKCNECGKTFTQSSSLTQHQRTHTGERPYTCEECGKAFSRSSFLVQHQRIHTGVKPYGCEQCGKTFRCRSFLTQHQRIHTGEKPYKCNECGNSFRNHSHLTEHQRIHTGEKPYKCNRCGKAFNQNTHLIHHQRIHTGEKPYICSECGSSFRKHSNLTQHQRIHTGEKPHKCDECGKTFQTKANLSQHQRIHSGEKPYKCKECGKAFCQSPSLIKHQRIHTGEKPYKCKECGKAFTQSTPLTKHQRIHTGERPYKCSECGKAFIQSICLIRHQRSHTGEKPYKCNECGKGFNQNTCLTQHMRIHTGEKPYKCKECGKAFAHSSSLTEHHRTHTGEKLYKCSECEKTFRKYAHLSEHYRIHTGEKPYECIECGKFFRHSSVLFRHQKLHSGD.

Lys-43 is covalently cross-linked (Glycyl lysine isopeptide (Lys-Gly) (interchain with G-Cter in SUMO2)). C2H2-type zinc fingers lie at residues 155 to 177, 183 to 205, 211 to 233, 239 to 261, 267 to 289, 295 to 317, 323 to 345, 351 to 373, 379 to 401, 407 to 429, 435 to 457, 463 to 485, 491 to 513, and 519 to 541; these read WKCNECGKTFTQSSSLTQHQRTH, YTCEECGKAFSRSSFLVQHQRIH, YGCEQCGKTFRCRSFLTQHQRIH, YKCNECGNSFRNHSHLTEHQRIH, YKCNRCGKAFNQNTHLIHHQRIH, YICSECGSSFRKHSNLTQHQRIH, HKCDECGKTFQTKANLSQHQRIH, YKCKECGKAFCQSPSLIKHQRIH, YKCKECGKAFTQSTPLTKHQRIH, YKCSECGKAFIQSICLIRHQRSH, YKCNECGKGFNQNTCLTQHMRIH, YKCKECGKAFAHSSSLTEHHRTH, YKCSECEKTFRKYAHLSEHYRIH, and YECIECGKFFRHSSVLFRHQKLH.

This sequence belongs to the krueppel C2H2-type zinc-finger protein family. In terms of assembly, (Microbial infection) Interacts with human respiratory syncytial virus (HRSV) matrix protein; this interaction probably facilitates viral release.

The protein localises to the nucleus. Functionally, may be involved in transcriptional regulation. The sequence is that of Zinc finger protein 502 (ZNF502) from Homo sapiens (Human).